The sequence spans 428 residues: Histone-lysine N-methyltransferase SMYD3 (428 aa).

M1 is modified (N-acetylmethionine). The SET domain maps to 4–240; it reads LKVEKFTTAN…AGEELTICYL (237 aa). An S-adenosyl-L-methionine-binding site is contributed by 14–16; it reads RGN. Residues C49, C52, C62, C65, C71, C75, H83, and C87 each coordinate Zn(2+). The MYND-type zinc finger occupies 49-87; the sequence is CDRCLLGKEKLMRCSQCRIAKYCSAKCQKKAWPDHRREC. Residues Y124, N132, 205-206, Y239, and F259 contribute to the S-adenosyl-L-methionine site; that span reads NH. The segment at 272-428 is C-terminal domain; essential for histone methyltransferase activity, nuclear localization and mediates interaction with HSP90AA1; sequence DADMLTGDEQ…EECDANIRAS (157 aa).

The protein belongs to the class V-like SAM-binding methyltransferase superfamily. Histone-lysine methyltransferase family. In terms of assembly, interacts with HSPCA. Interacts with HELZ. Interacts with POLR2A; the interaction may be indirect and may be mediated by HELZ. Interacts with HSP90AA1; this interaction enhances SMYD3 histone-lysine N-methyltransferase.

The protein localises to the cytoplasm. Its subcellular location is the nucleus. It catalyses the reaction L-lysyl(4)-[histone H3] + 3 S-adenosyl-L-methionine = N(6),N(6),N(6)-trimethyl-L-lysyl(4)-[histone H3] + 3 S-adenosyl-L-homocysteine + 3 H(+). Its activity is regulated as follows. Histone methyltransferase activity strongly stimulated by HSPCA. In terms of biological role, histone methyltransferase. Specifically methylates 'Lys-4' of histone H3, inducing di- and tri-methylation, but not monomethylation. Also methylates 'Lys-5' of histone H4. Plays an important role in transcriptional activation as a member of an RNA polymerase complex. Binds DNA containing 5'-CCCTCC-3' or 5'-GAGGGG-3' sequences. The polypeptide is Histone-lysine N-methyltransferase SMYD3 (Smyd3) (Mus musculus (Mouse)).